A 497-amino-acid polypeptide reads, in one-letter code: Glutamyl-tRNA(Gln) amidotransferase subunit A (497 aa).

Active-site charge relay system residues include Lys85 and Ser160. Ser184 acts as the Acyl-ester intermediate in catalysis.

Belongs to the amidase family. GatA subfamily. Heterotrimer of A, B and C subunits.

The enzyme catalyses L-glutamyl-tRNA(Gln) + L-glutamine + ATP + H2O = L-glutaminyl-tRNA(Gln) + L-glutamate + ADP + phosphate + H(+). In terms of biological role, allows the formation of correctly charged Gln-tRNA(Gln) through the transamidation of misacylated Glu-tRNA(Gln) in organisms which lack glutaminyl-tRNA synthetase. The reaction takes place in the presence of glutamine and ATP through an activated gamma-phospho-Glu-tRNA(Gln). The polypeptide is Glutamyl-tRNA(Gln) amidotransferase subunit A (gatA) (Mycobacterium leprae (strain TN)).